Consider the following 110-residue polypeptide: NADH-quinone oxidoreductase subunit K (110 aa).

Helical transmembrane passes span Leu13–Met33, Ile41–Val61, and Ile73–Tyr93.

The protein belongs to the complex I subunit 4L family. In terms of assembly, NDH-1 is composed of 14 different subunits. Subunits NuoA, H, J, K, L, M, N constitute the membrane sector of the complex.

It localises to the cell inner membrane. The enzyme catalyses a quinone + NADH + 5 H(+)(in) = a quinol + NAD(+) + 4 H(+)(out). Its function is as follows. NDH-1 shuttles electrons from NADH, via FMN and iron-sulfur (Fe-S) centers, to quinones in the respiratory chain. The immediate electron acceptor for the enzyme in this species is believed to be ubiquinone. Couples the redox reaction to proton translocation (for every two electrons transferred, four hydrogen ions are translocated across the cytoplasmic membrane), and thus conserves the redox energy in a proton gradient. The sequence is that of NADH-quinone oxidoreductase subunit K from Rickettsia prowazekii (strain Madrid E).